The sequence spans 288 residues: Beta-lactamase PSE-1 (288 aa).

The signal sequence occupies residues 1 to 17; the sequence is MKFLLAFSLLIPSVVFA. Ser65 (acyl-ester intermediate) is an active-site residue. An intrachain disulfide couples Cys72 to Cys118. 229–231 is a binding site for substrate; that stretch reads RSG.

The protein belongs to the class-A beta-lactamase family. Monomer.

The enzyme catalyses a beta-lactam + H2O = a substituted beta-amino acid. Its activity is regulated as follows. Inhibited by p-chloromercuribenzoate but not by cloxacillin. Hydrolyzes penicillin, ampicillin and carbenicillin but not other antibiotics including oxacillin, methicillin and cloxacillin. This is Beta-lactamase PSE-1 from Pseudomonas aeruginosa.